A 166-amino-acid polypeptide reads, in one-letter code: Interferon gamma (166 aa).

The first 23 residues, 1–23 (MSYTTYFLAFQLCVTLCFSGSYC), serve as a signal peptide directing secretion. Glutamine 24 bears the Pyrrolidone carboxylic acid mark. N-linked (GlcNAc...) asparagine glycosylation is found at asparagine 39 and asparagine 106.

It belongs to the type II (or gamma) interferon family. Homodimer. Interacts with IFNGR1 (via extracellular domain); this interaction promotes IFNGR1 dimerization. As to expression, released primarily from activated T lymphocytes.

It is found in the secreted. In terms of biological role, type II interferon produced by immune cells such as T-cells and NK cells that plays crucial roles in antimicrobial, antiviral, and antitumor responses by activating effector immune cells and enhancing antigen presentation. Primarily signals through the JAK-STAT pathway after interaction with its receptor IFNGR1 to affect gene regulation. Upon IFNG binding, IFNGR1 intracellular domain opens out to allow association of downstream signaling components JAK2, JAK1 and STAT1, leading to STAT1 activation, nuclear translocation and transcription of IFNG-regulated genes. Many of the induced genes are transcription factors such as IRF1 that are able to further drive regulation of a next wave of transcription. Plays a role in class I antigen presentation pathway by inducing a replacement of catalytic proteasome subunits with immunoproteasome subunits. In turn, increases the quantity, quality, and repertoire of peptides for class I MHC loading. Increases the efficiency of peptide generation also by inducing the expression of activator PA28 that associates with the proteasome and alters its proteolytic cleavage preference. Up-regulates as well MHC II complexes on the cell surface by promoting expression of several key molecules such as cathepsins B/CTSB, H/CTSH, and L/CTSL. Participates in the regulation of hematopoietic stem cells during development and under homeostatic conditions by affecting their development, quiescence, and differentiation. In Sus scrofa (Pig), this protein is Interferon gamma (IFNG).